Here is a 344-residue protein sequence, read N- to C-terminus: Ras association domain-containing protein 1 (344 aa).

An N-acetylserine modification is found at S2. At S2 the chain carries Phosphoserine. The tract at residues 2–119 (SGEPELIELR…DLGWEPAVER (118 aa)) is mediates interaction with E4F1. Residue R36 is modified to Omega-N-methylarginine. The segment at 51 to 105 (GHRFQPAGPATHTWCDLCGDFIWGVVRKGLQCARLSADCKFTCHYRCRALVCLDC) adopts a Phorbol-ester/DAG-type zinc-finger fold. Low complexity predominate over residues 179–189 (SVPSSKKPPSL). The segment at 179 to 203 (SVPSSKKPPSLQDARRGPGRGTSVR) is disordered. A Ras-associating domain is found at 198–292 (RGTSVRRRTS…LSFVLKENDS (95 aa)). Positions 294-341 (EVNWDAFSMPELHNFLRILQREEEEHLRQILQKYSYCRQKIQEALHAC) constitute an SARAH domain. The tract at residues 315–318 (EEEE) is MOAP1-binding.

In terms of assembly, interacts with MAP1S. Interacts with XPA. Binds to the N-terminal of CDC20 during prometaphase. Binds to STK3/MST2 and STK4/MST1. Recruited to the TNFRSF1A and TNFRSF10A complexes in response to their respective cognate ligand, after internalization. Can self-associate. Part of a complex with MDM2, DAXX, RASSF1 and USP7. Interacts with ECM2. As to quaternary structure, interacts with MOAP1. Interacts with E4F1. Interacts with RSSF5 and probably associates with HRAS via a RSSF1 isoform A-RSSF5 heterodimer. Interacts (via C-terminus) with DAXX (via N-terminus); the interaction is independent of MDM2 and TP53. Interacts (via N-terminus) with MDM2 (via C-terminus); the interaction is independent of TP53. Interacts with RAB39A. Interacts with RAB39B; the interaction is weak. Interacts (via N-terminus) with DAXX. Interacts with RAB39B; the interaction is strong. Does not interact with RAB39A. In terms of assembly, interacts (via N-terminus) with DAXX. In terms of tissue distribution, isoform A and isoform C are ubiquitously expressed in all tissues tested, however isoform A is absent in many corresponding cancer cell lines. Isoform B is mainly expressed in hematopoietic cells.

The protein resides in the cytoplasm. The protein localises to the cytoskeleton. It localises to the microtubule organizing center. It is found in the centrosome. Its subcellular location is the spindle. The protein resides in the spindle pole. The protein localises to the nucleus. In terms of biological role, potential tumor suppressor. Required for death receptor-dependent apoptosis. Mediates activation of STK3/MST2 and STK4/MST1 during Fas-induced apoptosis by preventing their dephosphorylation. When associated with MOAP1, promotes BAX conformational change and translocation to mitochondrial membranes in response to TNF and TNFSF10 stimulation. Isoform A interacts with CDC20, an activator of the anaphase-promoting complex, APC, resulting in the inhibition of APC activity and mitotic progression. Inhibits proliferation by negatively regulating cell cycle progression at the level of G1/S-phase transition by regulating accumulation of cyclin D1 protein. Isoform C has been shown not to perform these roles, no function has been identified for this isoform. Isoform A disrupts interactions among MDM2, DAXX and USP7, thus contributing to the efficient activation of TP53 by promoting MDM2 self-ubiquitination in cell-cycle checkpoint control in response to DNA damage. In Homo sapiens (Human), this protein is Ras association domain-containing protein 1.